Reading from the N-terminus, the 386-residue chain is S-adenosylmethionine synthase (386 aa).

Residue His-16 participates in ATP binding. Asp-18 lines the Mg(2+) pocket. Glu-44 is a binding site for K(+). Glu-57 and Gln-100 together coordinate L-methionine. The tract at residues 100–110 (QSPDINQGVDR) is flexible loop. ATP-binding positions include 164–166 (DGK), 230–231 (KF), Asp-239, 245–246 (RK), Ala-262, and Lys-266. Asp-239 provides a ligand contact to L-methionine. Lys-270 contributes to the L-methionine binding site.

This sequence belongs to the AdoMet synthase family. In terms of assembly, homotetramer; dimer of dimers. Mg(2+) serves as cofactor. Requires K(+) as cofactor.

Its subcellular location is the cytoplasm. The catalysed reaction is L-methionine + ATP + H2O = S-adenosyl-L-methionine + phosphate + diphosphate. It functions in the pathway amino-acid biosynthesis; S-adenosyl-L-methionine biosynthesis; S-adenosyl-L-methionine from L-methionine: step 1/1. In terms of biological role, catalyzes the formation of S-adenosylmethionine (AdoMet) from methionine and ATP. The overall synthetic reaction is composed of two sequential steps, AdoMet formation and the subsequent tripolyphosphate hydrolysis which occurs prior to release of AdoMet from the enzyme. This is S-adenosylmethionine synthase from Helicobacter hepaticus (strain ATCC 51449 / 3B1).